The sequence spans 646 residues: Exoribonuclease 2 (646 aa).

The 328-residue stretch at 191–518 (RIDLTALDFV…NHRLLKAIIQ (328 aa)) folds into the RNB domain. Positions 563-645 (DKTFSAEIVD…ETRNIVARPV (83 aa)) constitute an S1 motif domain.

Belongs to the RNR ribonuclease family. RNase II subfamily.

The protein resides in the cytoplasm. It catalyses the reaction Exonucleolytic cleavage in the 3'- to 5'-direction to yield nucleoside 5'-phosphates.. Involved in mRNA degradation. Hydrolyzes single-stranded polyribonucleotides processively in the 3' to 5' direction. The chain is Exoribonuclease 2 from Xenorhabdus bovienii (strain SS-2004) (Xenorhabdus nematophila subsp. bovienii).